Reading from the N-terminus, the 444-residue chain is Chitinase-like protein Idgf4 (444 aa).

The first 22 residues, 1–22 (MKLLLILLGALLAVLTIKRTSA), serve as a signal peptide directing secretion. In terms of domain architecture, GH18 spans 27–444 (NHLICYYDGT…ILRAIKFKFQ (418 aa)). Cysteines 31 and 58 form a disulfide. An N-linked (GlcNAc...) asparagine glycan is attached at Asn-226. A disulfide bridge connects residues Cys-345 and Cys-428.

Belongs to the glycosyl hydrolase 18 family. IDGF subfamily. In terms of processing, glycosylated.

It is found in the secreted. Functionally, cooperates with insulin-like peptides to stimulate the proliferation, polarization and motility of imaginal disk cells. May act by stabilizing the binding of insulin-like peptides to its receptor through a simultaneous interaction with both molecules to form a multiprotein signaling complex. This chain is Chitinase-like protein Idgf4 (Idgf4), found in Glossina morsitans morsitans (Savannah tsetse fly).